We begin with the raw amino-acid sequence, 49 residues long: Osteocalcin (49 aa).

A Gla domain is found at 1-47 (YLDHGLGAPAPYVDPLEPKREVCELNPDCDELADQMGFQEAYRRFYG). P9 is subject to 4-hydroxyproline. E17, E21, E24, and D30 together coordinate Ca(2+). E17, E21, and E24 each carry 4-carboxyglutamate. A disulfide bridge connects residues C23 and C29.

The protein belongs to the osteocalcin/matrix Gla protein family. Gamma-carboxyglutamic acid residues are formed by vitamin K dependent carboxylation. These residues are essential for the binding of calcium.

The protein resides in the secreted. The carboxylated form is one of the main organic components of the bone matrix, which constitutes 1-2% of the total bone protein: it acts as a negative regulator of bone formation and is required to limit bone formation without impairing bone resorption or mineralization. The carboxylated form binds strongly to apatite and calcium. Functionally, the uncarboxylated form acts as a hormone secreted by osteoblasts, which regulates different cellular processes, such as energy metabolism, male fertility and brain development. Regulates of energy metabolism by acting as a hormone favoring pancreatic beta-cell proliferation, insulin secretion and sensitivity and energy expenditure. Uncarboxylated osteocalcin hormone also promotes testosterone production in the testes: acts as a ligand for G protein-coupled receptor GPRC6A at the surface of Leydig cells, initiating a signaling response that promotes the expression of enzymes required for testosterone synthesis in a CREB-dependent manner. Also acts as a regulator of brain development: osteocalcin hormone crosses the blood-brain barrier and acts as a ligand for GPR158 on neurons, initiating a signaling response that prevents neuronal apoptosis in the hippocampus, favors the synthesis of all monoamine neurotransmitters and inhibits that of gamma-aminobutyric acid (GABA). Osteocalcin also crosses the placenta during pregnancy and maternal osteocalcin is required for fetal brain development. The polypeptide is Osteocalcin (Lama guanicoe (Guanaco)).